Reading from the N-terminus, the 502-residue chain is Keratin-associated protein 16-1 (502 aa).

15 consecutive repeat copies span residues 4–8 (CCCSR), 58–62 (CCQPS), 73–77 (CCEAT), 93–97 (CCEAT), 108–112 (CCQPV), 113–117 (CCEAT), 133–137 (CCEAT), 152–156 (CCETS), 177–181 (CCQPV), 187–191 (CCSAV), 212–216 (CCQPV), 222–226 (CCPSV), 272–276 (CCVQG), 292–296 (CCVSS), and 347–351 (CCRPG). The tract at residues 73 to 307 (CCEATICEPS…CQPVCPEPSP (235 aa)) is 15 X 5 AA repeats of C-C-X(3). The segment at 435-502 (RQPCTDSDND…QPAASKPADR (68 aa)) is disordered. Residues 489-502 (AAAPQPAASKPADR) show a composition bias toward low complexity.

The protein belongs to the KRTAP type 16 family. Interacts with hair keratins.

Functionally, in the hair cortex, hair keratin intermediate filaments are embedded in an interfilamentous matrix, consisting of hair keratin-associated proteins (KRTAP), which are essential for the formation of a rigid and resistant hair shaft through their extensive disulfide bond cross-linking with abundant cysteine residues of hair keratins. The matrix proteins include the high-sulfur and high-glycine-tyrosine keratins. The sequence is that of Keratin-associated protein 16-1 (Krtap16-1) from Mus musculus (Mouse).